Consider the following 159-residue polypeptide: Aphid transmission protein (159 aa).

It belongs to the caulimoviridae ORF II family.

In terms of biological role, this protein is involved in virus transmission. This Arabidopsis thaliana (Mouse-ear cress) protein is Aphid transmission protein.